The primary structure comprises 262 residues: Phosphatidylserine decarboxylase proenzyme (262 aa).

Active-site charge relay system; for autoendoproteolytic cleavage activity residues include aspartate 86, histidine 142, and serine 226. Serine 226 serves as the catalytic Schiff-base intermediate with substrate; via pyruvic acid; for decarboxylase activity. Serine 226 bears the Pyruvic acid (Ser); by autocatalysis mark.

This sequence belongs to the phosphatidylserine decarboxylase family. PSD-B subfamily. Prokaryotic type I sub-subfamily. Heterodimer of a large membrane-associated beta subunit and a small pyruvoyl-containing alpha subunit. It depends on pyruvate as a cofactor. Post-translationally, is synthesized initially as an inactive proenzyme. Formation of the active enzyme involves a self-maturation process in which the active site pyruvoyl group is generated from an internal serine residue via an autocatalytic post-translational modification. Two non-identical subunits are generated from the proenzyme in this reaction, and the pyruvate is formed at the N-terminus of the alpha chain, which is derived from the carboxyl end of the proenzyme. The autoendoproteolytic cleavage occurs by a canonical serine protease mechanism, in which the side chain hydroxyl group of the serine supplies its oxygen atom to form the C-terminus of the beta chain, while the remainder of the serine residue undergoes an oxidative deamination to produce ammonia and the pyruvoyl prosthetic group on the alpha chain. During this reaction, the Ser that is part of the protease active site of the proenzyme becomes the pyruvoyl prosthetic group, which constitutes an essential element of the active site of the mature decarboxylase.

It localises to the cell membrane. It catalyses the reaction a 1,2-diacyl-sn-glycero-3-phospho-L-serine + H(+) = a 1,2-diacyl-sn-glycero-3-phosphoethanolamine + CO2. It participates in phospholipid metabolism; phosphatidylethanolamine biosynthesis; phosphatidylethanolamine from CDP-diacylglycerol: step 2/2. Catalyzes the formation of phosphatidylethanolamine (PtdEtn) from phosphatidylserine (PtdSer). This Bacillus cereus (strain ZK / E33L) protein is Phosphatidylserine decarboxylase proenzyme.